Reading from the N-terminus, the 226-residue chain is Reticulon-like protein B16 (226 aa).

The Reticulon domain occupies 41 to 224 (AADLLLWRRR…RLSWSLSKDK (184 aa)). 3 helical membrane passes run 54 to 74 (LGVI…GLPF), 75 to 95 (LSVS…HARV), and 149 to 169 (VVIC…CTLL).

It localises to the endoplasmic reticulum membrane. The sequence is that of Reticulon-like protein B16 (RTNLB16) from Arabidopsis thaliana (Mouse-ear cress).